A 183-amino-acid chain; its full sequence is Oligoribonuclease (183 aa).

In terms of domain architecture, Exonuclease spans 8 to 171 (LIWLDMEMTG…ADIRESIAEL (164 aa)). Tyrosine 129 is an active-site residue.

Belongs to the oligoribonuclease family.

The protein resides in the cytoplasm. 3'-to-5' exoribonuclease specific for small oligoribonucleotides. In Aromatoleum aromaticum (strain DSM 19018 / LMG 30748 / EbN1) (Azoarcus sp. (strain EbN1)), this protein is Oligoribonuclease.